A 439-amino-acid chain; its full sequence is tRNA modification GTPase MnmE (439 aa).

The (6S)-5-formyl-5,6,7,8-tetrahydrofolate site is built by Arg-20, Glu-78, and Lys-116. The TrmE-type G domain occupies 211 to 364 (GIYVTILGEP…LLNLIKQKVE (154 aa)). Residues 221–226 (NSGKST), 240–246 (SEYAGTT), and 265–268 (DTAG) contribute to the GTP site. The Mg(2+) site is built by Ser-225 and Thr-246. Lys-439 contacts (6S)-5-formyl-5,6,7,8-tetrahydrofolate.

Belongs to the TRAFAC class TrmE-Era-EngA-EngB-Septin-like GTPase superfamily. TrmE GTPase family. Homodimer. Heterotetramer of two MnmE and two MnmG subunits. It depends on K(+) as a cofactor.

The protein localises to the cytoplasm. In terms of biological role, exhibits a very high intrinsic GTPase hydrolysis rate. Involved in the addition of a carboxymethylaminomethyl (cmnm) group at the wobble position (U34) of certain tRNAs, forming tRNA-cmnm(5)s(2)U34. The protein is tRNA modification GTPase MnmE of Ehrlichia chaffeensis (strain ATCC CRL-10679 / Arkansas).